A 173-amino-acid chain; its full sequence is Enhancer of split mdelta protein (173 aa).

A bHLH domain is found at 15–72; sequence YRKVTKPLLERKRRARMNLYLDELKDLIVDTMDAQGEQVSKLEKADILELTVNYLKAQ. One can recognise an Orange domain in the interval 93 to 126; the sequence is FRAGYTQAAYEVSHIFSTVPGLDLKFGTHLMKQL. The interval 147-173 is disordered; it reads VNLADQKRSKSPREEDIHHGEEVWRPW. Basic and acidic residues predominate over residues 151-173; sequence DQKRSKSPREEDIHHGEEVWRPW. The short motif at 170-173 is the WRPW motif element; sequence WRPW.

In terms of assembly, transcription repression requires formation of a complex with a corepressor protein (Groucho).

Its subcellular location is the nucleus. Functionally, transcriptional repressor of genes that require a bHLH protein for their transcription. May serve as a transcriptional regulator of the Achaete-scute complex (AS-C) genes. Contributes to the neural-epidermal lineage decision during early neurogenesis. As part of the Notch signaling pathway, required to maintain the self-renewal and identity of type II neuroblasts by regulating the expression of the transcriptional repressor erm. This Drosophila melanogaster (Fruit fly) protein is Enhancer of split mdelta protein.